The chain runs to 237 residues: Bax inhibitor 1 (237 aa).

Residues 1 to 29 (MNIFDRKINFDALLKFSHITPSTQQHLKK) lie on the Cytoplasmic side of the membrane. Residue lysine 7 forms a Glycyl lysine isopeptide (Lys-Gly) (interchain with G-Cter in ubiquitin) linkage. The helical transmembrane segment at 30–50 (VYASFALCMFVAAAGAYVHVV) threads the bilayer. The Lumenal segment spans residues 51–52 (TR). The chain crosses the membrane as a helical span at residues 53–73 (FIQAGLLSALGSLGLMIWLMA). Topologically, residues 74–86 (TPHSHETEQKRLG) are cytoplasmic. A helical transmembrane segment spans residues 87–107 (LLAGFAFLTGVGLGPALDLCI). Residues 108 to 112 (AINPS) lie on the Lumenal side of the membrane. Residues 113-133 (ILPTAFMGTAMIFTCFTLSAL) form a helical membrane-spanning segment. Topologically, residues 134 to 139 (YARRRS) are cytoplasmic. A helical transmembrane segment spans residues 140 to 160 (YLFLGGILMSAMSLMVLSSLG). Over 161 to 166 (NLFFGS) the chain is Lumenal. Residues 167 to 187 (IWLFQANLYVGLVVMCGFVLF) traverse the membrane as a helical segment. At 188 to 206 (DTQLIIEKAENGDKDYIWH) the chain is on the cytoplasmic side. Residues 207-227 (CVDLFSDFVTLFRKLMMILAM) constitute an intramembrane region (helical). At 228–237 (NEKDKKKEKK) the chain is on the cytoplasmic side.

The protein belongs to the BI1 family. In terms of assembly, interacts with BCL2 and BCL2L1. Interacts with ERN1. In terms of processing, ubiquitinated by BFAR, leading to proteasomal degradation.

It localises to the endoplasmic reticulum membrane. Functionally, endoplasmic reticulum (ER)-resident protein that confers cellular protection as an anti-apoptotic protein by limiting multiple stress-inducing pathways surrounding the endoplasmic reticulum and mitochondria. Inhibits the activities of the key sensor for the endoplasmic reticulum unfolded protein response IRE1alpha/ERN1 both directly and by blocking BAX/BAK binding. Modulates ER calcium homeostasis by acting as a calcium-leak channel. Negatively regulates autophagy and autophagosome formation, especially during periods of nutrient deprivation, and reduces cell survival during starvation. The protein is Bax inhibitor 1 (TMBIM6) of Sus scrofa (Pig).